The chain runs to 202 residues: uncharacterized protein (202 aa).

Residue Lys-136 forms an Isoglutamyl lysine isopeptide (Lys-Gln) (interchain with Q-Cter in protein Pup) linkage.

This is an uncharacterized protein from Mycobacterium tuberculosis (strain ATCC 25618 / H37Rv).